The chain runs to 427 residues: Dorsalin-1 (427 aa).

The N-terminal stretch at 1-20 (MHYFGVLAALSVFNIIACLT) is a signal peptide. The propeptide occupies 21–318 (RGKPLENWKK…PRQHSSRSKR (298 aa)). 4 N-linked (GlcNAc...) asparagine glycosylation sites follow: asparagine 71, asparagine 136, asparagine 265, and asparagine 292. Residues 288 to 321 (KLGKNDSSSEEEQREEKAIARPRQHSSRSKRSIG) are disordered. Positions 307–321 (ARPRQHSSRSKRSIG) are enriched in basic residues. Intrachain disulfides connect cysteine 325/cysteine 391, cysteine 354/cysteine 424, and cysteine 358/cysteine 426.

The protein belongs to the TGF-beta family. As to quaternary structure, homodimer; disulfide-linked. Expressed selectively in the dorsal neural tube. Lower levels seen in kidney and myotomal cells.

It localises to the secreted. Functionally, appears to regulate cell differentiation within the neural tube. May regulate the differentiation of cell types along the dorsoventral axis of the neural tube, acting in conjunction with distinct ventralizing signals from the notochord and floor plate. Controls the cell differentiation in the neural tube in several ways: (1) promotes the differentiation of cell types that derive from the dorsal neural tube. (2) ensures that the dorsal neural tube is refractory to ventralizing species from the notochord. (3) can diffuse and influence the fate of cells in more ventral regions of the neural tube. This is Dorsalin-1 (DSL1) from Gallus gallus (Chicken).